Reading from the N-terminus, the 438-residue chain is Alkylcitrate synthase tstJ (438 aa).

Catalysis depends on residues histidine 309 and aspartate 365.

It belongs to the citrate synthase family.

The catalysed reaction is (2E,10E)-dode-2,10-dicenoyl-CoA + oxaloacetate + H2O = (4E,11E)-2-hydroxytrideca-4,11-dien-1,2,3-tricarboxylate + CoA + H(+). It participates in secondary metabolite biosynthesis. Functionally, alkylcitrate synthase; part of the gene cluster that mediates the biosynthesis of the antihypercholesterolemic agents phomoidrides which are dimeric anhydrides. Within the pathway, the alkylcitrate synthase (ACS) tstJ and the alkylcitrate dehydratase (ACDH) tstI produce the decarboxylated monomeric anhydrides by coupling the C12-fatty acyl product from phiA with oxalacetic acid. The pathway begins with the highly reducing polyketide synthase tstA that catalyzes the formation of a C12-fatty acyl-ACP, starting from one acetate and 5 malonate units. The hydrolase tstM is involved in the release of the C12-fatty acyl chain from phiA. The alkylcitrate synthase (ACS) tstJ and the alkylcitrate dehydratase (ACDH) tstI then give rise to decarboxylated monomeric anhydrides by coupling the C12-fatty acyl chain with oxalacetic acid. The cyclase tstC is responsible for the dimerization of the monomeric anhydrides which leads to the production of prephomoidride that contains the characteristic bicyclo[4.3.1]deca-1,6-diene system of phomoidrides. Iterative oxidation catalyzed by the alpha-ketoglutarate-dependent dioxygenase tstK produced then phomoidride A. Finally, the methyltransferase tstE converts phomoidride A to phomoidride B via an acetalization reaction. The phosphatidylethanolamine-binding protein tstB and tstN are not essential for dimerization and their functions have still to be determined. In Talaromyces stipitatus (strain ATCC 10500 / CBS 375.48 / QM 6759 / NRRL 1006) (Penicillium stipitatum), this protein is Alkylcitrate synthase tstJ.